The primary structure comprises 594 residues: MKANQLLKNLVLTELESAVSSYLTKQKIDLPLTEFKIRIEYSRDEKFGDYSSPFALENKNILKLNPKEIAEGVLSEIKNETLFEFVTFSPPGFINFRIRSQFLIQYTNQVMSPMVTFAKTDEKQSILLEFVSANPTGPMNIVSARSAAYGDALANLLLSLGHTVKREFYVNDYGNQVYLLGVAVLLRIFEEKGEKISFQEDESKESVFTLIEKRILPKESYRGEYIRDIAKEVLSNKTKSIQVEEWIQNKNWDECIHDLSKYAVEYNLSRQKEDLKLFGVHFDQFFSERSLHEAGDVENVPTLLKKEDVSTIDGKLHFLSTQYGDDKDRVIRREDGRPTYLMADIAYHFDKYKRGFTKLIDIWGPDHYGYIARLKGAVLSFGKSNDSFLILIAQQVNLIENKEKVKMSKRLGIFQTMRDLLSYLGKNGKDVGRYFFLMRSSDAPLDFDLDLAKDESDKNPVFYIQYAHARICSIFRELQISIADWSIPKVVSGDCFQSEERLRLLFWVARFQEEVYDTATNLEPHRLTNYLQSLSKAFTKFYSHKDNRIKEKQGEEREQLLFLILFTKRAIASGLELLGISSPEKMSKEDESNT.

Residues 133-143 (ANPTGPMNIVS) carry the 'HIGH' region motif.

Belongs to the class-I aminoacyl-tRNA synthetase family. In terms of assembly, monomer.

The protein localises to the cytoplasm. It carries out the reaction tRNA(Arg) + L-arginine + ATP = L-arginyl-tRNA(Arg) + AMP + diphosphate. The polypeptide is Arginine--tRNA ligase (Leptospira biflexa serovar Patoc (strain Patoc 1 / Ames)).